A 609-amino-acid polypeptide reads, in one-letter code: Myoneurin (609 aa).

The 66-residue stretch at 24 to 89 (CDCTILIGDF…IYSGNLNYDS (66 aa)) folds into the BTB domain. 2 short sequence motifs (nuclear localization signal) span residues 172-188 (KKSQKIKRWKRPLRSHQ) and 257-262 (QKPAKL). C2H2-type zinc fingers lie at residues 301–323 (PVCNTCGKVFSEASSLRRHMRIH), 329–351 (YVCHLCAKAFTQCNQLKTHVRTH), 357–380 (YQCKKCDKGFAQKCQLVFHSRMHH), 386–408 (YKCDVCNLQFATSSNLKIHARKH), 414–436 (YVCDRCGQRFAQASTLTYHVRRH), 442–464 (YVCDTCGKAFAVSSSLITHARKH), 470–492 (YICGVCRKSFISSGELNKHFRSH), and 498–521 (FVCEVCGNSYTDVKNLKKHKLKMH). Residues 528-553 (IEMKSAENSSSSEDSTTKSPEPESLE) are disordered. Low complexity predominate over residues 533–546 (AENSSSSEDSTTKS).

It localises to the nucleus. This is Myoneurin (mynn) from Xenopus laevis (African clawed frog).